A 314-amino-acid chain; its full sequence is Hydroxyacyl-coenzyme A dehydrogenase, mitochondrial (314 aa).

A mitochondrion-targeting transit peptide spans 1–12 (MAFVTRQFVRSM). NAD(+)-binding positions include 34 to 39 (GGGLMG) and Asp-57. CoA is bound at residue Ser-73. Position 75 is an N6-acetyllysine (Lys-75). Lys-80 is a binding site for CoA. At Lys-80 the chain carries N6-succinyllysine. Residues Lys-81 and Lys-87 each carry the N6-acetyllysine; alternate modification. Lys-81 and Lys-87 each carry N6-succinyllysine; alternate. NAD(+) is bound at residue Glu-122. N6-acetyllysine is present on Lys-125. Residue Lys-127 coordinates NAD(+). Lys-127 is modified (N6-(2-hydroxyisobutyryl)lysine). Lys-136 is subject to N6-acetyllysine; alternate. Lys-136 carries the post-translational modification N6-succinyllysine; alternate. Ser-149 and Asn-173 together coordinate NAD(+). Ser-149 is a binding site for CoA. The residue at position 179 (Lys-179) is an N6-acetyllysine. N6-acetyllysine; alternate occurs at positions 185, 192, and 202. 3 positions are modified to N6-succinyllysine; alternate: Lys-185, Lys-192, and Lys-202. Position 206 is an N6-succinyllysine (Lys-206). 2 positions are modified to N6-acetyllysine; alternate: Lys-212 and Lys-241. N6-succinyllysine; alternate occurs at positions 212 and 241. Lys-305 contacts NAD(+). At Lys-312 the chain carries N6-acetyllysine; alternate. N6-succinyllysine; alternate is present on Lys-312.

This sequence belongs to the 3-hydroxyacyl-CoA dehydrogenase family. Homodimer. Interacts with GLUD1; this interaction inhibits the activation of glutamate dehydrogenase 1 (GLUD1). Succinylation at Lys-81, adjacent to a coenzyme A binding site. Desuccinylated by SIRT5.

It localises to the mitochondrion matrix. It carries out the reaction a (3S)-3-hydroxyacyl-CoA + NAD(+) = a 3-oxoacyl-CoA + NADH + H(+). It catalyses the reaction (3S)-3-hydroxybutanoyl-CoA + NAD(+) = acetoacetyl-CoA + NADH + H(+). The catalysed reaction is (3S)-hydroxydecanoyl-CoA + NAD(+) = 3-oxodecanoyl-CoA + NADH + H(+). The enzyme catalyses (3S)-hydroxyhexadecanoyl-CoA + NAD(+) = 3-oxohexadecanoyl-CoA + NADH + H(+). Its pathway is lipid metabolism; fatty acid beta-oxidation. Its function is as follows. Mitochondrial fatty acid beta-oxidation enzyme that catalyzes the third step of the beta-oxidation cycle for medium and short-chain 3-hydroxy fatty acyl-CoAs (C4 to C10). Plays a role in the control of insulin secretion by inhibiting the activation of glutamate dehydrogenase 1 (GLUD1), an enzyme that has an important role in regulating amino acid-induced insulin secretion. Plays a role in the maintenance of normal spermatogenesis through the reduction of fatty acid accumulation in the testes. This is Hydroxyacyl-coenzyme A dehydrogenase, mitochondrial (Hadh) from Rattus norvegicus (Rat).